The sequence spans 312 residues: tRNA dimethylallyltransferase (312 aa).

12–19 (GPTAIGKS) contributes to the ATP binding site. 14 to 19 (TAIGKS) is a substrate binding site. 2 interaction with substrate tRNA regions span residues 38–41 (DSKL) and 162–166 (QRVLR).

This sequence belongs to the IPP transferase family. Monomer. It depends on Mg(2+) as a cofactor.

It catalyses the reaction adenosine(37) in tRNA + dimethylallyl diphosphate = N(6)-dimethylallyladenosine(37) in tRNA + diphosphate. Its function is as follows. Catalyzes the transfer of a dimethylallyl group onto the adenine at position 37 in tRNAs that read codons beginning with uridine, leading to the formation of N6-(dimethylallyl)adenosine (i(6)A). In Buchnera aphidicola subsp. Cinara cedri (strain Cc), this protein is tRNA dimethylallyltransferase.